Consider the following 390-residue polypeptide: 8-demethyl-8-(2-methoxy-alpha-L-rhamnosyl)-tetracenomycin-C 3'-O-methyltransferase (390 aa).

Residues 202–208 (ELGIGGY), Ser217, Asp234, 252–253 (SQ), and Asp275 contribute to the S-adenosyl-L-methionine site. Residue Asp275 coordinates Mg(2+). His278 acts as the Proton acceptor in catalysis. Glu303 and Asp304 together coordinate Mg(2+).

The protein belongs to the methyltransferase OleY/MycE family. It depends on Mg(2+) as a cofactor.

The catalysed reaction is 8-demethyl-8-(2-O-methyl-alpha-L-rhamnosyl)-tetracenomycin C + S-adenosyl-L-methionine = 8-demethyl-8-(2,3-di-O-methyl-alpha-L-rhamnosyl)-tetracenomycin C + S-adenosyl-L-homocysteine + H(+). It participates in antibiotic biosynthesis. In terms of biological role, O-methyltransferase involved in the biosynthesis of the permethylated L-rhamnose moiety of elloramycin, an antitumor polyketide. Mediates the methylation of the hydroxy groups at the 3'-position after the sugar moiety has been attached to the aglycon. This Streptomyces olivaceus protein is 8-demethyl-8-(2-methoxy-alpha-L-rhamnosyl)-tetracenomycin-C 3'-O-methyltransferase.